The primary structure comprises 389 residues: Putative RNA methyltransferase R405 (389 aa).

S-adenosyl-L-methionine is bound by residues Gln207, Asp261, and Asp314. Cys342 functions as the Nucleophile in the catalytic mechanism.

It belongs to the class I-like SAM-binding methyltransferase superfamily. RNA M5U methyltransferase family.

The polypeptide is Putative RNA methyltransferase R405 (Acanthamoeba polyphaga (Amoeba)).